A 311-amino-acid polypeptide reads, in one-letter code: MRPLAIVGPTGVGKSELALDVIERLGGQVSVEIVNADAMQLYRGMDIGTAKLPVAARRGIPHHQLDVLDVTETATVASYQRTAAADIEAIAARGAVPVVVGGSMLYVQSLLDDWSFPGTDPAVRVRWEQQLAEVGVVRLHAELARRDLAAAAAILPTDGRRTVRALEVVELTGKPFAASAPRIGAPRWDTVIVGLDCDRTILSERLARRIDSMFGQGLVDEVRMLLRWGLRDGVTASRALGYAQVLTALDAGGDADHLDEARQQTYLGHRRYARRQRSWFHRDHRVHWLDVGTVDRVGVVDDALRVWRNAS.

An ATP-binding site is contributed by 8–15 (GPTGVGKS). 10–15 (TGVGKS) serves as a coordination point for substrate.

Belongs to the IPP transferase family. As to quaternary structure, monomer. Mg(2+) is required as a cofactor.

It catalyses the reaction adenosine(37) in tRNA + dimethylallyl diphosphate = N(6)-dimethylallyladenosine(37) in tRNA + diphosphate. Functionally, catalyzes the transfer of a dimethylallyl group onto the adenine at position 37 in tRNAs that read codons beginning with uridine, leading to the formation of N6-(dimethylallyl)adenosine (i(6)A). This Mycobacterium leprae (strain Br4923) protein is tRNA dimethylallyltransferase.